Here is a 655-residue protein sequence, read N- to C-terminus: Alpha-L-iduronidase (655 aa).

An N-terminal signal peptide occupies residues 1-25 (MRPPGPRAPGLALLAALLAAPRALA). Alpha-D-mannopyranose is bound by residues proline 53, leucine 55, and histidine 57. An alpha-L-iduronate-binding site is contributed by histidine 90. N-linked (GlcNAc...) asparagine glycosylation occurs at asparagine 109. Positions 180 and 181 each coordinate alpha-L-iduronate. Residue glutamate 181 is the Proton donor of the active site. N-linked (GlcNAc...) asparagine glycosylation is found at asparagine 189 and asparagine 242. Alpha-L-iduronate is bound by residues lysine 263, glutamate 298, and glycine 304. Catalysis depends on glutamate 298, which acts as the Nucleophile. Tryptophan 305 contributes to the alpha-D-mannopyranose binding site. Asparagine 335 is a glycosylation site (N-linked (GlcNAc...) asparagine). Alpha-L-iduronate contacts are provided by aspartate 348 and arginine 362. Asparagine 371 and asparagine 414 each carry an N-linked (GlcNAc...) asparagine glycan. A disulfide bridge connects residues cysteine 540 and cysteine 576.

The protein belongs to the glycosyl hydrolase 39 family. As to quaternary structure, monomer. Post-translationally, a smaller 63 kDa protein probably arises from IDUA protein by proteolytic cleavage. N-glycosylation contributes to substrate binding and is required for full enzymatic activity. As to expression, detected in testis (at protein level). Expressed ubiquitously.

It is found in the lysosome. It carries out the reaction Hydrolysis of unsulfated alpha-L-iduronosidic linkages in dermatan sulfate.. The sequence is that of Alpha-L-iduronidase (IDUA) from Canis lupus familiaris (Dog).